A 969-amino-acid chain; its full sequence is Bifunctional glutamine synthetase adenylyltransferase/adenylyl-removing enzyme (969 aa).

The adenylyl removase stretch occupies residues 1–456 (MNWQANIHKL…HFEQLFAAPH (456 aa)). The segment at 466 to 969 (EKRLAEVWLG…SALLEDESAK (504 aa)) is adenylyl transferase.

It belongs to the GlnE family. Requires Mg(2+) as cofactor.

The enzyme catalyses [glutamine synthetase]-O(4)-(5'-adenylyl)-L-tyrosine + phosphate = [glutamine synthetase]-L-tyrosine + ADP. The catalysed reaction is [glutamine synthetase]-L-tyrosine + ATP = [glutamine synthetase]-O(4)-(5'-adenylyl)-L-tyrosine + diphosphate. In terms of biological role, involved in the regulation of glutamine synthetase GlnA, a key enzyme in the process to assimilate ammonia. When cellular nitrogen levels are high, the C-terminal adenylyl transferase (AT) inactivates GlnA by covalent transfer of an adenylyl group from ATP to specific tyrosine residue of GlnA, thus reducing its activity. Conversely, when nitrogen levels are low, the N-terminal adenylyl removase (AR) activates GlnA by removing the adenylyl group by phosphorolysis, increasing its activity. The regulatory region of GlnE binds the signal transduction protein PII (GlnB) which indicates the nitrogen status of the cell. The protein is Bifunctional glutamine synthetase adenylyltransferase/adenylyl-removing enzyme of Nitrosococcus oceani (strain ATCC 19707 / BCRC 17464 / JCM 30415 / NCIMB 11848 / C-107).